The sequence spans 624 residues: Phosphomethylpyrimidine synthase (624 aa).

Substrate contacts are provided by residues Asn-231, Met-260, Tyr-289, His-325, 345-347 (SRG), 386-389 (DGLR), and Glu-425. Zn(2+) is bound at residue His-429. Tyr-452 contributes to the substrate binding site. His-493 is a Zn(2+) binding site. Cys-573, Cys-576, and Cys-581 together coordinate [4Fe-4S] cluster.

Belongs to the ThiC family. As to quaternary structure, homodimer. It depends on [4Fe-4S] cluster as a cofactor.

The catalysed reaction is 5-amino-1-(5-phospho-beta-D-ribosyl)imidazole + S-adenosyl-L-methionine = 4-amino-2-methyl-5-(phosphooxymethyl)pyrimidine + CO + 5'-deoxyadenosine + formate + L-methionine + 3 H(+). Its pathway is cofactor biosynthesis; thiamine diphosphate biosynthesis. Its function is as follows. Catalyzes the synthesis of the hydroxymethylpyrimidine phosphate (HMP-P) moiety of thiamine from aminoimidazole ribotide (AIR) in a radical S-adenosyl-L-methionine (SAM)-dependent reaction. In Myxococcus xanthus (strain DK1622), this protein is Phosphomethylpyrimidine synthase.